Here is a 438-residue protein sequence, read N- to C-terminus: Tol-Pal system protein TolB (438 aa).

The N-terminal stretch at 1–35 (MITMKNILKLRATGLLLLLLLMISVLGNGIGQAMA) is a signal peptide.

The protein belongs to the TolB family. As to quaternary structure, the Tol-Pal system is composed of five core proteins: the inner membrane proteins TolA, TolQ and TolR, the periplasmic protein TolB and the outer membrane protein Pal. They form a network linking the inner and outer membranes and the peptidoglycan layer.

The protein resides in the periplasm. Its function is as follows. Part of the Tol-Pal system, which plays a role in outer membrane invagination during cell division and is important for maintaining outer membrane integrity. In Desulfotalea psychrophila (strain LSv54 / DSM 12343), this protein is Tol-Pal system protein TolB.